Here is a 460-residue protein sequence, read N- to C-terminus: Bifunctional protein GlmU (460 aa).

The tract at residues 1 to 229 (MTNYAIILAA…FNESLGVNDR (229 aa)) is pyrophosphorylase. UDP-N-acetyl-alpha-D-glucosamine is bound by residues 8 to 11 (LAAG), Lys-22, Gln-72, and 77 to 78 (GT). Asp-102 lines the Mg(2+) pocket. 4 residues coordinate UDP-N-acetyl-alpha-D-glucosamine: Gly-139, Glu-154, Asn-169, and Asn-227. Mg(2+) is bound at residue Asn-227. A linker region spans residues 230–250 (VALATAETVMRQRITQKHMVN). Residues 251–460 (GVTFQNPETV…RLAHHPSRSK (210 aa)) are N-acetyltransferase. UDP-N-acetyl-alpha-D-glucosamine contacts are provided by Arg-332 and Lys-350. His-362 acts as the Proton acceptor in catalysis. UDP-N-acetyl-alpha-D-glucosamine contacts are provided by Tyr-365 and Asn-376. Acetyl-CoA contacts are provided by residues Ala-379, 385–386 (NY), Ser-404, Ala-422, and Arg-439.

The protein in the N-terminal section; belongs to the N-acetylglucosamine-1-phosphate uridyltransferase family. It in the C-terminal section; belongs to the transferase hexapeptide repeat family. Homotrimer. The cofactor is Mg(2+).

It localises to the cytoplasm. The enzyme catalyses alpha-D-glucosamine 1-phosphate + acetyl-CoA = N-acetyl-alpha-D-glucosamine 1-phosphate + CoA + H(+). The catalysed reaction is N-acetyl-alpha-D-glucosamine 1-phosphate + UTP + H(+) = UDP-N-acetyl-alpha-D-glucosamine + diphosphate. The protein operates within nucleotide-sugar biosynthesis; UDP-N-acetyl-alpha-D-glucosamine biosynthesis; N-acetyl-alpha-D-glucosamine 1-phosphate from alpha-D-glucosamine 6-phosphate (route II): step 2/2. It participates in nucleotide-sugar biosynthesis; UDP-N-acetyl-alpha-D-glucosamine biosynthesis; UDP-N-acetyl-alpha-D-glucosamine from N-acetyl-alpha-D-glucosamine 1-phosphate: step 1/1. Its pathway is bacterial outer membrane biogenesis; LPS lipid A biosynthesis. Its function is as follows. Catalyzes the last two sequential reactions in the de novo biosynthetic pathway for UDP-N-acetylglucosamine (UDP-GlcNAc). The C-terminal domain catalyzes the transfer of acetyl group from acetyl coenzyme A to glucosamine-1-phosphate (GlcN-1-P) to produce N-acetylglucosamine-1-phosphate (GlcNAc-1-P), which is converted into UDP-GlcNAc by the transfer of uridine 5-monophosphate (from uridine 5-triphosphate), a reaction catalyzed by the N-terminal domain. The chain is Bifunctional protein GlmU from Streptococcus pyogenes serotype M6 (strain ATCC BAA-946 / MGAS10394).